The following is a 132-amino-acid chain: MNLNQYYGTGRRKTASARVFIKSGISNGRVIINKRTLDQYFPRNNTQSIIIRPLKITNLLDKLDIYITVKGGGISGQAGAICHGMTRALLQYDEKLRGVLRSVGLVTRDSREVERKKVGLRKARRRPQFSKR.

This sequence belongs to the universal ribosomal protein uS9 family.

This is Small ribosomal subunit protein uS9 from Blochmanniella pennsylvanica (strain BPEN).